Reading from the N-terminus, the 70-residue chain is ATP synthase subunit c (70 aa).

Transmembrane regions (helical) follow at residues 4–24 (IAAA…NGLI) and 49–69 (GIAL…LAFF).

The protein belongs to the ATPase C chain family. F-type ATPases have 2 components, F(1) - the catalytic core - and F(0) - the membrane proton channel. F(1) has five subunits: alpha(3), beta(3), gamma(1), delta(1), epsilon(1). F(0) has three main subunits: a(1), b(2) and c(10-14). The alpha and beta chains form an alternating ring which encloses part of the gamma chain. F(1) is attached to F(0) by a central stalk formed by the gamma and epsilon chains, while a peripheral stalk is formed by the delta and b chains. The F(1)F(0) complex interacts with SpoIIIJ and YqjG; YqgA is found in the same complex.

It localises to the cell membrane. Its function is as follows. F(1)F(0) ATP synthase produces ATP from ADP in the presence of a proton or sodium gradient. F-type ATPases consist of two structural domains, F(1) containing the extramembraneous catalytic core and F(0) containing the membrane proton channel, linked together by a central stalk and a peripheral stalk. During catalysis, ATP synthesis in the catalytic domain of F(1) is coupled via a rotary mechanism of the central stalk subunits to proton translocation. Functionally, key component of the F(0) channel; it plays a direct role in translocation across the membrane. A homomeric c-ring of between 10-14 subunits forms the central stalk rotor element with the F(1) delta and epsilon subunits. The polypeptide is ATP synthase subunit c (Bacillus subtilis (strain 168)).